The sequence spans 149 residues: Transcriptional repressor NrdR (149 aa).

A zinc finger spans residues 3 to 34; that stretch reads CPFCSATDTKVIDSRLVSDGHQVRRRRQCLAC. Residues 49 to 139 enclose the ATP-cone domain; it reads PKVIKSNGNR…VYRSFEDIKE (91 aa).

Belongs to the NrdR family. It depends on Zn(2+) as a cofactor.

In terms of biological role, negatively regulates transcription of bacterial ribonucleotide reductase nrd genes and operons by binding to NrdR-boxes. This is Transcriptional repressor NrdR from Aliivibrio salmonicida (strain LFI1238) (Vibrio salmonicida (strain LFI1238)).